Reading from the N-terminus, the 190-residue chain is Holliday junction branch migration complex subunit RuvA (190 aa).

The segment at 1–64 (MIGKLSGTLD…EDAQILYGFA (64 aa)) is domain I. The segment at 65 to 137 (TSQERAAFRE…LKGKLGPDIG (73 aa)) is domain II. The segment at 137 to 141 (GVAAS) is flexible linker. The interval 142–190 (VANDSQADILQALLALGYSDKEAAAALKALPSDVGVSEGIRLALRALGK) is domain III.

Belongs to the RuvA family. In terms of assembly, homotetramer. Forms an RuvA(8)-RuvB(12)-Holliday junction (HJ) complex. HJ DNA is sandwiched between 2 RuvA tetramers; dsDNA enters through RuvA and exits via RuvB. An RuvB hexamer assembles on each DNA strand where it exits the tetramer. Each RuvB hexamer is contacted by two RuvA subunits (via domain III) on 2 adjacent RuvB subunits; this complex drives branch migration. In the full resolvosome a probable DNA-RuvA(4)-RuvB(12)-RuvC(2) complex forms which resolves the HJ.

It localises to the cytoplasm. Functionally, the RuvA-RuvB-RuvC complex processes Holliday junction (HJ) DNA during genetic recombination and DNA repair, while the RuvA-RuvB complex plays an important role in the rescue of blocked DNA replication forks via replication fork reversal (RFR). RuvA specifically binds to HJ cruciform DNA, conferring on it an open structure. The RuvB hexamer acts as an ATP-dependent pump, pulling dsDNA into and through the RuvAB complex. HJ branch migration allows RuvC to scan DNA until it finds its consensus sequence, where it cleaves and resolves the cruciform DNA. This chain is Holliday junction branch migration complex subunit RuvA, found in Albidiferax ferrireducens (strain ATCC BAA-621 / DSM 15236 / T118) (Rhodoferax ferrireducens).